Here is a 425-residue protein sequence, read N- to C-terminus: MFRDSAKIYVKAGNGGNGMVSFHREKYIAAGGPDGGDGGKGGDVIFVVDEGLNTLIDFRYKKNFKAEPGQDGGTSNRSGKNGEDLIIKVPLGTVVKDELTDMVLVDLIKPGQTCVIAKGGRGGKGNQHFATPTRQVPNFAKSGDLGEEYSLILEMKMIADVGLVGYPNVGKSTILSMVSAAKPKIANYHFTTLVPNLGVVQIEHGKSFVIADIPGLIEGAHEGVGLGHQFLRHVERTKLLVHVVDVSGVEGRDAVEDFDTINSELQKYNQVLSTRPQIVAANKMDIPGAEENYKAFKEELEKRGYKVFGISAATNKGLKELLYAVSETLKTLPDTILLDETQNEEVVYKVQEEKPFEIHIEDGVYVIEGKWLRKVLGSTNITNYESLQYFQRALKKKGVITALEEMGIQEGDTVRIYDTEFDYTR.

Residues 1–158 (MFRDSAKIYV…YSLILEMKMI (158 aa)) enclose the Obg domain. Residues 159 to 330 (ADVGLVGYPN…LLYAVSETLK (172 aa)) form the OBG-type G domain. Residues 165–172 (GYPNVGKS), 190–194 (FTTLV), 212–215 (DIPG), 282–285 (NKMD), and 311–313 (SAA) each bind GTP. Residues Ser172 and Thr192 each coordinate Mg(2+). Positions 348 to 425 (YKVQEEKPFE…IYDTEFDYTR (78 aa)) constitute an OCT domain.

This sequence belongs to the TRAFAC class OBG-HflX-like GTPase superfamily. OBG GTPase family. As to quaternary structure, monomer. The cofactor is Mg(2+).

The protein resides in the cytoplasm. An essential GTPase which binds GTP, GDP and possibly (p)ppGpp with moderate affinity, with high nucleotide exchange rates and a fairly low GTP hydrolysis rate. Plays a role in control of the cell cycle, stress response, ribosome biogenesis and in those bacteria that undergo differentiation, in morphogenesis control. The chain is GTPase Obg from Ruminiclostridium cellulolyticum (strain ATCC 35319 / DSM 5812 / JCM 6584 / H10) (Clostridium cellulolyticum).